Here is a 183-residue protein sequence, read N- to C-terminus: Type II secretion system protein H (183 aa).

The propeptide at 1 to 8 (MRRHRQSG) is leader sequence. Position 9 is an N-methylphenylalanine (Phe9). A helical membrane pass occupies residues 9–28 (FTLLEVLLVAMLMGLVATAV).

It belongs to the GSP H family. In terms of assembly, type II secretion is composed of four main components: the outer membrane complex, the inner membrane complex, the cytoplasmic secretion ATPase and the periplasm-spanning pseudopilus. Interacts with core component ExeG. Post-translationally, cleaved by prepilin peptidase. In terms of processing, methylated by prepilin peptidase at the amino group of the N-terminal phenylalanine once the leader sequence is cleaved by prepilin peptidase.

It localises to the cell inner membrane. In terms of biological role, component of the type II secretion system required for the energy-dependent secretion of extracellular factors such as proteases and toxins from the periplasm. Part of the pseudopilus tip complex that is critical for the recognition and binding of secretion substrates. In Aeromonas hydrophila, this protein is Type II secretion system protein H (exeH).